The sequence spans 138 residues: Putative nickel-responsive regulator (138 aa).

Positions 78, 89, 91, and 97 each coordinate Ni(2+).

Belongs to the transcriptional regulatory CopG/NikR family. It depends on Ni(2+) as a cofactor.

Transcriptional regulator. This is Putative nickel-responsive regulator from Pyrococcus abyssi (strain GE5 / Orsay).